A 366-amino-acid polypeptide reads, in one-letter code: Ribosomal RNA large subunit methyltransferase M (366 aa).

Residues S188, 221–224, D240, D260, and D277 contribute to the S-adenosyl-L-methionine site; that span reads CPGG. Catalysis depends on K306, which acts as the Proton acceptor.

Belongs to the class I-like SAM-binding methyltransferase superfamily. RNA methyltransferase RlmE family. RlmM subfamily. In terms of assembly, monomer.

The protein localises to the cytoplasm. The catalysed reaction is cytidine(2498) in 23S rRNA + S-adenosyl-L-methionine = 2'-O-methylcytidine(2498) in 23S rRNA + S-adenosyl-L-homocysteine + H(+). In terms of biological role, catalyzes the 2'-O-methylation at nucleotide C2498 in 23S rRNA. This chain is Ribosomal RNA large subunit methyltransferase M, found in Sodalis glossinidius (strain morsitans).